Reading from the N-terminus, the 521-residue chain is MASNSLFSTVTPCQQNFFWDPSTSRRFSPPSSSLQPGKMSDVSPVVAAQQQQQQQQQQQQQQQQQQQQQQQEAAAAAAAAAAAAAAAAAVPRLRPPHDNRTMVEIIADHPAELVRTDSPNFLCSVLPSHWRCNKTLPVAFKVVALGEVPDGTVVTVMAGNDENYSAELRNASAVMKNQVARFNDLRFVGRSGRGKSFTLTITVFTNPPQVATYHRAIKVTVDGPREPRRHRQKLDDSKPSLFSDRLSDLGRIPHPSMRVGVPPQNPRPSLNSAPSPFNPQGQSQITDPRQAQSSPPWSYDQSYPSYLSQMTSPSIHSTTPLSSTRGTGLPAITDVPRRISDDDTATSDFCLWPSTLSKKSQAGASELGPFSDPRQFPSISSLTESRFSNPRMHYPATFTYTPPVTSGMSLGMSATTHYHTYLPPPYPGSSQSQSGPFQTSSTPYLYYGTSSGSYQFPMVPGGDRSPSRMLPPCTTTSNGSTLLNPNLPNQNDGVDADGSHSSSPTVLNSSGRMDESVWRPY.

Disordered stretches follow at residues 18–59 (FWDP…QQQQ) and 222–340 (DGPR…RRIS). 2 stretches are compositionally biased toward low complexity: residues 21–33 (PSTS…PSSS) and 47–59 (AAQQ…QQQQ). The region spanning 101-229 (TMVEIIADHP…TVDGPREPRR (129 aa)) is the Runt domain. Lysine 238 is covalently cross-linked (Glycyl lysine isopeptide (Lys-Gly) (interchain with G-Cter in SUMO2)). The segment at 242–258 (FSDRLSDLGRIPHPSMR) is required for interaction with FOXO1. An Asymmetric dimethylarginine modification is found at arginine 267. Polar residues predominate over residues 267-326 (RPSLNSAPSPFNPQGQSQITDPRQAQSSPPWSYDQSYPSYLSQMTSPSIHSTTPLSSTRG). Residues 336–439 (PRRISDDDTA…SQSQSGPFQT (104 aa)) are interaction with KAT6A. Position 340 is a phosphoserine (serine 340). The interval 374–468 (RQFPSISSLT…VPGGDRSPSR (95 aa)) is interaction with KAT6B. Position 451 is a phosphoserine; by CDK1 (serine 451). The disordered stretch occupies residues 460–521 (PGGDRSPSRM…RMDESVWRPY (62 aa)). 2 stretches are compositionally biased toward polar residues: residues 473–492 (CTTT…NQND) and 499–511 (SHSS…NSSG). The span at 512 to 521 (RMDESVWRPY) shows a compositional bias: basic and acidic residues.

As to quaternary structure, heterodimer of an alpha and a beta subunit. The alpha subunit binds DNA as a monomer and through the Runt domain. DNA-binding is increased by heterodimerization. Interacts with XRCC6 (Ku70) and XRCC5 (Ku80). Interacts with HIVEP3. Interacts with IFI204. Interaction with SATB2; the interaction results in enhanced DNA binding and transactivation by these transcription factors. Binds to HIPK3. Interacts with FOXO1 (via a C-terminal region); the interaction inhibits RUNX2 transcriptional activity towards BGLAP. This interaction is prevented on insulin or IGF1 stimulation as FOXO1 is exported from the nucleus. Interacts with CCNB1, KAT6A and KAT6B. Interacts with FOXP3. Interacts with TMEM119. Interacts with OLFM2. Interacts with IPO7; the interaction inhibits RUNX2 nuclear translocation in osteoblasts. In terms of assembly, interacts with DDX5. In terms of processing, phosphorylated; probably by MAP kinases (MAPK). Phosphorylation by HIPK3 is required for the SPEN/MINT and FGF2 transactivation during osteoblastic differentiation. Phosphorylation at Ser-451 by CDK1 promotes endothelial cell proliferation required for tumor angiogenesis probably by facilitating cell cycle progression. Isoform 3 is phosphorylated on Ser-340. Specifically expressed in osteoblasts.

The protein localises to the nucleus. It is found in the cytoplasm. Transcription factor involved in osteoblastic differentiation and skeletal morphogenesis. Essential for the maturation of osteoblasts and both intramembranous and endochondral ossification. CBF binds to the core site, 5'-PYGPYGGT-3', of a number of enhancers and promoters, including murine leukemia virus, polyomavirus enhancer, T-cell receptor enhancers, osteocalcin, osteopontin, bone sialoprotein, alpha 1(I) collagen, LCK, IL-3 and GM-CSF promoters. In osteoblasts, supports transcription activation: synergizes with SPEN/MINT to enhance FGFR2-mediated activation of the osteocalcin FGF-responsive element (OCFRE). Inhibits KAT6B-dependent transcriptional activation. The sequence is that of Runt-related transcription factor 2 (RUNX2) from Homo sapiens (Human).